We begin with the raw amino-acid sequence, 903 residues long: DNA-directed DNA polymerase (903 aa).

The interval 103-340 (YDHTKIRVAN…VLQIDAKRQF (238 aa)) is 3'-5'exonuclease. Mg(2+) is bound by residues Asp-114, Glu-116, and Asp-222. Residues 248-264 (TRVKVIENMYGSREIIT) form a beta hairpin region. Residues Asp-327, Asp-411, and Leu-412 each contribute to the Mg(2+) site. Positions 380–903 (IPQGRSHPVQ…KASLFDMFDF (524 aa)) are polymerase. Residues 414–416 (SLY), Arg-482, and Lys-560 each bind substrate. Asp-623 contributes to the Mg(2+) binding site. Residues 705-708 (KKRY) form a binding of DNA in B-conformation region. Positions 897–903 (LFDMFDF) are interaction with the polymerase clamp.

It belongs to the DNA polymerase type-B family. In terms of assembly, part of the replicase complex that includes the DNA polymerase, the polymerase clamp, the clamp loader complex, the single-stranded DNA binding protein, and the primase/helicase. Interacts with the polymerase clamp; this interaction constitutes the polymerase holoenzyme. It depends on Mg(2+) as a cofactor.

It carries out the reaction DNA(n) + a 2'-deoxyribonucleoside 5'-triphosphate = DNA(n+1) + diphosphate. Its function is as follows. Replicates the viral genomic DNA. This polymerase possesses two enzymatic activities: DNA synthesis (polymerase) and an exonucleolytic activity that degrades single-stranded DNA in the 3'- to 5'-direction for proofreading purpose. The polypeptide is DNA-directed DNA polymerase (43) (Escherichia coli (Bacteriophage RB69)).